The chain runs to 768 residues: 5-methyltetrahydropteroyltriglutamate--homocysteine methyltransferase (768 aa).

Residues 17–20 (RELK) and K117 contribute to the 5-methyltetrahydropteroyltri-L-glutamate site. L-homocysteine is bound by residues 442–444 (IGS) and E495. L-methionine contacts are provided by residues 442-444 (IGS) and E495. 5-methyltetrahydropteroyltri-L-glutamate contacts are provided by residues 526–527 (RC) and W572. D610 is an L-homocysteine binding site. L-methionine is bound at residue D610. E616 serves as a coordination point for 5-methyltetrahydropteroyltri-L-glutamate. Zn(2+) is bound by residues H653, C655, and E677. H706 functions as the Proton donor in the catalytic mechanism. C738 contributes to the Zn(2+) binding site.

It belongs to the vitamin-B12 independent methionine synthase family. Zn(2+) is required as a cofactor.

The enzyme catalyses 5-methyltetrahydropteroyltri-L-glutamate + L-homocysteine = tetrahydropteroyltri-L-glutamate + L-methionine. The protein operates within amino-acid biosynthesis; L-methionine biosynthesis via de novo pathway; L-methionine from L-homocysteine (MetE route): step 1/1. Functionally, catalyzes the transfer of a methyl group from 5-methyltetrahydrofolate to homocysteine resulting in methionine formation. The sequence is that of 5-methyltetrahydropteroyltriglutamate--homocysteine methyltransferase from Bifidobacterium adolescentis (strain ATCC 15703 / DSM 20083 / NCTC 11814 / E194a).